The chain runs to 122 residues: Large ribosomal subunit protein uL14c (122 aa).

It belongs to the universal ribosomal protein uL14 family. In terms of assembly, part of the 50S ribosomal subunit.

It localises to the plastid. It is found in the chloroplast. In terms of biological role, binds to 23S rRNA. This chain is Large ribosomal subunit protein uL14c, found in Psilotum nudum (Whisk fern).